Here is a 253-residue protein sequence, read N- to C-terminus: 5-oxoprolinase subunit A (253 aa).

It belongs to the LamB/PxpA family. As to quaternary structure, forms a complex composed of PxpA, PxpB and PxpC.

It catalyses the reaction 5-oxo-L-proline + ATP + 2 H2O = L-glutamate + ADP + phosphate + H(+). Catalyzes the cleavage of 5-oxoproline to form L-glutamate coupled to the hydrolysis of ATP to ADP and inorganic phosphate. The protein is 5-oxoprolinase subunit A of Bacillus cereus (strain 03BB102).